A 447-amino-acid polypeptide reads, in one-letter code: Omega-3 fatty acid desaturase, chloroplastic (447 aa).

Residues 167-171 carry the Histidine box-1 motif; that stretch reads HDCGH. The Histidine box-2 motif lies at 203-207; it reads HRTHH. The Histidine box-3 motif lies at 370–374; that stretch reads HVIHH.

Belongs to the fatty acid desaturase type 1 family.

The protein resides in the plastid. It localises to the chloroplast membrane. Its pathway is lipid metabolism; polyunsaturated fatty acid biosynthesis. Its function is as follows. Chloroplast omega-3 fatty acid desaturase introduces the third double bond in the biosynthesis of 16:3 and 18:3 fatty acids, important constituents of plant membranes. It is thought to use ferredoxin as an electron donor and to act on fatty acids esterified to galactolipids, sulfolipids and phosphatidylglycerol. In Sesamum indicum (Oriental sesame), this protein is Omega-3 fatty acid desaturase, chloroplastic (FAD7).